We begin with the raw amino-acid sequence, 371 residues long: 4-hydroxy-3-methylbut-2-en-1-yl diphosphate synthase (flavodoxin) (371 aa).

[4Fe-4S] cluster is bound by residues cysteine 270, cysteine 273, cysteine 305, and glutamate 312.

Belongs to the IspG family. [4Fe-4S] cluster is required as a cofactor.

It carries out the reaction (2E)-4-hydroxy-3-methylbut-2-enyl diphosphate + oxidized [flavodoxin] + H2O + 2 H(+) = 2-C-methyl-D-erythritol 2,4-cyclic diphosphate + reduced [flavodoxin]. Its pathway is isoprenoid biosynthesis; isopentenyl diphosphate biosynthesis via DXP pathway; isopentenyl diphosphate from 1-deoxy-D-xylulose 5-phosphate: step 5/6. Its function is as follows. Converts 2C-methyl-D-erythritol 2,4-cyclodiphosphate (ME-2,4cPP) into 1-hydroxy-2-methyl-2-(E)-butenyl 4-diphosphate. The sequence is that of 4-hydroxy-3-methylbut-2-en-1-yl diphosphate synthase (flavodoxin) from Shewanella sp. (strain W3-18-1).